Consider the following 381-residue polypeptide: Chorismate synthase (381 aa).

The NADP(+) site is built by arginine 41 and arginine 47. FMN contacts are provided by residues 127–129, 247–248, glycine 291, 306–310, and arginine 332; these read RAS, QA, and KPIPT.

It belongs to the chorismate synthase family. Homotetramer. The cofactor is FMNH2.

The enzyme catalyses 5-O-(1-carboxyvinyl)-3-phosphoshikimate = chorismate + phosphate. Its pathway is metabolic intermediate biosynthesis; chorismate biosynthesis; chorismate from D-erythrose 4-phosphate and phosphoenolpyruvate: step 7/7. Its function is as follows. Catalyzes the anti-1,4-elimination of the C-3 phosphate and the C-6 proR hydrogen from 5-enolpyruvylshikimate-3-phosphate (EPSP) to yield chorismate, which is the branch point compound that serves as the starting substrate for the three terminal pathways of aromatic amino acid biosynthesis. This reaction introduces a second double bond into the aromatic ring system. This is Chorismate synthase from Anaeromyxobacter sp. (strain K).